A 212-amino-acid polypeptide reads, in one-letter code: Peptide methionine sulfoxide reductase MsrA (212 aa).

Residue cysteine 52 is part of the active site.

This sequence belongs to the MsrA Met sulfoxide reductase family.

The catalysed reaction is L-methionyl-[protein] + [thioredoxin]-disulfide + H2O = L-methionyl-(S)-S-oxide-[protein] + [thioredoxin]-dithiol. It carries out the reaction [thioredoxin]-disulfide + L-methionine + H2O = L-methionine (S)-S-oxide + [thioredoxin]-dithiol. In terms of biological role, has an important function as a repair enzyme for proteins that have been inactivated by oxidation. Catalyzes the reversible oxidation-reduction of methionine sulfoxide in proteins to methionine. The protein is Peptide methionine sulfoxide reductase MsrA of Shigella dysenteriae serotype 1 (strain Sd197).